The primary structure comprises 523 residues: UPF0329 protein ECU02_0050 (523 aa).

A disordered region spans residues 326–386; that stretch reads EEKAKSKKRG…KTGKKSEGGR (61 aa). The span at 330-339 shows a compositional bias: basic residues; the sequence is KSKKRGKRKS. Basic and acidic residues predominate over residues 344–353; the sequence is EAKEEEKKES. Residues 354–368 show a composition bias toward acidic residues; that stretch reads ETEEVEAGEEVEMPS.

The protein belongs to the UPF0329 family.

This is UPF0329 protein ECU02_0050 from Encephalitozoon cuniculi (strain GB-M1) (Microsporidian parasite).